Here is a 190-residue protein sequence, read N- to C-terminus: MDQSSNLTGKMLIAMPGMRDPRFEQSVILICAHSEDGAMGLVVNRPLPEIGFSDLLAQLGIQAGANALDIPVRFGGPVEPGRGFVLHRAPREIELDENRMRITDDLAMSTTRDILEDFARGLGPQPAMLALGYAGWGPGQLDSEIRENGWLTSDRGDEIIFGAEDAGKWRAALKSLGIDPLMLSPDAGHA.

The protein belongs to the UPF0301 (AlgH) family.

This Paracoccus denitrificans (strain Pd 1222) protein is UPF0301 protein Pden_0436.